A 294-amino-acid chain; its full sequence is 1,4-dihydroxy-2-naphthoate octaprenyltransferase (294 aa).

6 helical membrane-spanning segments follow: residues 35 to 55 (SAVW…VIGV), 103 to 123 (AGLA…ATCI), 140 to 160 (GFGE…GTEY), 166 to 186 (VDWV…SVLV), 220 to 240 (LLVA…WCAV), and 272 to 292 (GLAM…AGSV).

This sequence belongs to the MenA family. Type 1 subfamily.

Its subcellular location is the cell membrane. It catalyses the reaction an all-trans-polyprenyl diphosphate + 1,4-dihydroxy-2-naphthoate + H(+) = a 2-demethylmenaquinol + CO2 + diphosphate. It participates in quinol/quinone metabolism; menaquinone biosynthesis; menaquinol from 1,4-dihydroxy-2-naphthoate: step 1/2. In terms of biological role, conversion of 1,4-dihydroxy-2-naphthoate (DHNA) to demethylmenaquinone (DMK). This is 1,4-dihydroxy-2-naphthoate octaprenyltransferase from Mycobacterium leprae (strain TN).